We begin with the raw amino-acid sequence, 416 residues long: Basic salivary proline-rich protein 2 (416 aa).

A signal peptide spans 1–16 (MLLILLSVALLALSSA). Glutamine 17 is subject to Pyrrolidone carboxylic acid. A compositionally biased stretch (polar residues) spans 19 to 28 (LNEDVSQEES). The interval 19-416 (LNEDVSQEES…QGGRPSRPPQ (398 aa)) is disordered. Serine 24 is subject to Phosphoserine. Over residues 34–47 (GNPQGAPPQGGNKP) the composition is skewed to low complexity. Composition is skewed to pro residues over residues 48–104 (QGPP…PPPQ) and 112–165 (RSPP…PPPQ). At serine 52 the chain carries Phosphoserine. 15 consecutive repeat copies span residues 53–72 (PPGKPQGPPPQGGNQPQGPP), 74–93 (PPGKPQGPPPQGGNKPQGPP), 94–113 (PPGKPQGPPPQGDKSRSPRS), 114–133 (PPGKPQGPPPQGGNQPQGPP), 135–154 (PPGKPQGPPPQGGNKPQGPP), 155–174 (PPGKPQGPPPQGDNKSRSSR), 176–195 (PPGKPQGPPPQGGNQPQGPP), 197–216 (PPGKPQGPPPQGGNKPQGPP), 217–236 (PPGKPQGPPPQGDNKSQSAR), 238–257 (PPGKPQGPPPQGGNQPQGPP), 259–278 (PPGKPQGPPPQGGNKPQGPP), 279–298 (PPGKPQGPPPQGGSKSRSSR), 300–319 (PPGKPQGPPPQGGNQPQGPP), 321–340 (PPGKPQGPPPQGGNKPQGPP), and 341–360 (PPGKPQGPPPQGGSKSRSAR). The segment at 53 to 360 (PPGKPQGPPP…QGGSKSRSAR (308 aa)) is 15 X 20 AA approximate tandem repeats of P-P-G-K-P-Q-G-P-P-P-Q-G-[GD]-[NKS]-[KSQ]-[PRS]-[QRS] [GPS]-[PSAR]-[PSR]. Asparagine 168 carries N-linked (GlcNAc...) asparagine glycosylation. A compositionally biased stretch (pro residues) spans 177–227 (PGKPQGPPPQGGNQPQGPPPPPGKPQGPPPQGGNKPQGPPPPGKPQGPPPQ). N-linked (GlcNAc...) asparagine glycosylation occurs at asparagine 230. A glycan (O-linked (Hex) serine) is linked at serine 232. The span at 239–289 (PGKPQGPPPQGGNQPQGPPPPPGKPQGPPPQGGNKPQGPPPPGKPQGPPPQ) shows a compositional bias: pro residues. An N-linked (GlcNAc...) asparagine glycan is attached at asparagine 272. Over residues 290–300 (GGSKSRSSRSP) the composition is skewed to low complexity. 2 stretches are compositionally biased toward pro residues: residues 301–351 (PGKP…PPPQ) and 378–416 (QGPPPPAGGNPQQPQAPPAGQPQGPPRPPQGGRPSRPPQ).

Post-translationally, N- and O-glycosylated. In head and neck cancer patients, O-glycosylated with glucosylgalactosyl carbohydrate moiety. This modification would require prior hydroxylation on the lysine residue. Proteolytically cleaved at the tripeptide Xaa-Pro-Gln, where Xaa in the P(3) position is mostly lysine. The endoprotease may be of microbial origin. In terms of processing, pyroglutamate formation occurs on terminal Gln residues of cleaved peptides. Pyroglutamate formation found on at least Gln-398 and Gln-400.

Its subcellular location is the secreted. In Homo sapiens (Human), this protein is Basic salivary proline-rich protein 2 (PRB2).